A 466-amino-acid polypeptide reads, in one-letter code: Methylenetetrahydrofolate--tRNA-(uracil-5-)-methyltransferase TrmFO (466 aa).

Position 10–15 (10–15 (GGGLAG)) interacts with FAD.

This sequence belongs to the MnmG family. TrmFO subfamily. FAD serves as cofactor.

The protein resides in the cytoplasm. It carries out the reaction uridine(54) in tRNA + (6R)-5,10-methylene-5,6,7,8-tetrahydrofolate + NADH + H(+) = 5-methyluridine(54) in tRNA + (6S)-5,6,7,8-tetrahydrofolate + NAD(+). The catalysed reaction is uridine(54) in tRNA + (6R)-5,10-methylene-5,6,7,8-tetrahydrofolate + NADPH + H(+) = 5-methyluridine(54) in tRNA + (6S)-5,6,7,8-tetrahydrofolate + NADP(+). In terms of biological role, catalyzes the folate-dependent formation of 5-methyl-uridine at position 54 (M-5-U54) in all tRNAs. The chain is Methylenetetrahydrofolate--tRNA-(uracil-5-)-methyltransferase TrmFO from Phenylobacterium zucineum (strain HLK1).